The sequence spans 82 residues: Sec-independent protein translocase protein TatA (82 aa).

Residues 2-22 (GFGGISLWQLLIVLAIIVLLF) traverse the membrane as a helical segment. Residues 43 to 82 (KAMSDEKNTDKEKPEQIQKSEESAPLDSAHTEKNKDNNKV) are disordered. Basic and acidic residues-rich tracts occupy residues 44-64 (AMSD…KSEE) and 71-82 (AHTEKNKDNNKV).

It belongs to the TatA/E family. As to quaternary structure, the Tat system comprises two distinct complexes: a TatABC complex, containing multiple copies of TatA, TatB and TatC subunits, and a separate TatA complex, containing only TatA subunits. Substrates initially bind to the TatABC complex, which probably triggers association of the separate TatA complex to form the active translocon.

The protein resides in the cell inner membrane. Part of the twin-arginine translocation (Tat) system that transports large folded proteins containing a characteristic twin-arginine motif in their signal peptide across membranes. TatA could form the protein-conducting channel of the Tat system. The polypeptide is Sec-independent protein translocase protein TatA (Pseudoalteromonas translucida (strain TAC 125)).